The chain runs to 142 residues: Large ribosomal subunit protein uL13 (142 aa).

Belongs to the universal ribosomal protein uL13 family. As to quaternary structure, part of the 50S ribosomal subunit.

This protein is one of the early assembly proteins of the 50S ribosomal subunit, although it is not seen to bind rRNA by itself. It is important during the early stages of 50S assembly. The chain is Large ribosomal subunit protein uL13 from Pectobacterium atrosepticum (strain SCRI 1043 / ATCC BAA-672) (Erwinia carotovora subsp. atroseptica).